Reading from the N-terminus, the 326-residue chain is Aldo-keto reductase family 1 member D1 (326 aa).

Residues 22-26 and D53 contribute to the NADP(+) site; that span reads GLGTY. Substrate is bound at residue Y26. Residues Y58, W89, E120, and Y132 each contribute to the substrate site. Y58 functions as the Proton donor in the catalytic mechanism. NADP(+)-binding positions include 169 to 170, Q193, and 219 to 224; these read SN and YSPLGT. W230 contributes to the substrate binding site. 273 to 283 serves as a coordination point for NADP(+); sequence KSFNPERIKEN.

This sequence belongs to the aldo/keto reductase family.

The protein resides in the cytoplasm. The enzyme catalyses 5beta-cholestan-3-one + NADP(+) = cholest-4-en-3-one + NADPH + H(+). It carries out the reaction 4,5beta-dihydrocortisone + NADP(+) = cortisone + NADPH + H(+). It catalyses the reaction cortisol + NADPH + H(+) = 5beta-dihydrocortisol + NADP(+). The catalysed reaction is corticosterone + NADPH + H(+) = 5beta-dihydrocorticosterone + NADP(+). The enzyme catalyses 7alpha,12alpha-dihydroxycholest-4-en-3-one + NADPH + H(+) = 7alpha,12alpha-dihydroxy-5beta-cholestan-3-one + NADP(+). It carries out the reaction 7alpha-hydroxycholest-4-en-3-one + NADPH + H(+) = 7alpha-hydroxy-5beta-cholestan-3-one + NADP(+). It catalyses the reaction epitestosterone + NADPH + H(+) = 5beta-dihydroepitestosterone + NADP(+). The catalysed reaction is androst-4-ene-3,17-dione + NADPH + H(+) = 5beta-androstane-3,17-dione + NADP(+). The enzyme catalyses progesterone + NADPH + H(+) = 5beta-pregnan-3,20-dione + NADP(+). It carries out the reaction 21-hydroxyprogesterone + NADPH + H(+) = 5beta-dihydrodeoxycorticosterone + NADP(+). It catalyses the reaction aldosterone + NADPH + H(+) = 5beta-dihydroaldosterone + NADP(+). The catalysed reaction is 17beta-hydroxyandrosta-1,4-dien-3-one + NADPH + H(+) = 17beta-hydroxy-5beta-androst-1-en-3-one + NADP(+). The enzyme catalyses 17beta-hydroxyestr-4-en-3-one + NADPH + H(+) = 17beta-hydroxy-5beta-estran-3-one + NADP(+). It carries out the reaction 5beta-dihydrotestosterone + NADP(+) = testosterone + NADPH + H(+). It catalyses the reaction androst-4-ene-3,11,17-trione + NADPH + H(+) = 17beta-hydroxyandrost-4-ene-3,11-dione + NADP(+). Its activity is regulated as follows. Subject to inhibition by high substrate concentrations. Inhibited by testosterone concentrations above 10 uM. Inhibited by the primary and secondary bile acids chenodeoxycholic acid and ursodeoxycholic acid. Functionally, catalyzes the stereospecific NADPH-dependent reduction of the C4-C5 double bond of bile acid intermediates and steroid hormones carrying a delta(4)-3-one structure to yield an A/B cis-ring junction. This cis-configuration is crucial for bile acid biosynthesis and plays important roles in steroid metabolism. Capable of reducing a broad range of delta-(4)-3-ketosteroids from C18 (such as, 17beta-hydroxyestr-4-en-3-one) to C27 (such as, 7alpha-hydroxycholest-4-en-3-one). The sequence is that of Aldo-keto reductase family 1 member D1 (AKR1D1) from Oryctolagus cuniculus (Rabbit).